Here is a 320-residue protein sequence, read N- to C-terminus: 4-hydroxy-3-methylbut-2-enyl diphosphate reductase (320 aa).

A [4Fe-4S] cluster-binding site is contributed by C13. H41 and H75 together coordinate (2E)-4-hydroxy-3-methylbut-2-enyl diphosphate. Dimethylallyl diphosphate-binding residues include H41 and H75. Residues H41 and H75 each coordinate isopentenyl diphosphate. C97 is a [4Fe-4S] cluster binding site. A (2E)-4-hydroxy-3-methylbut-2-enyl diphosphate-binding site is contributed by H125. Position 125 (H125) interacts with dimethylallyl diphosphate. Residue H125 coordinates isopentenyl diphosphate. E127 serves as the catalytic Proton donor. T168 is a binding site for (2E)-4-hydroxy-3-methylbut-2-enyl diphosphate. Position 225 (C225) interacts with [4Fe-4S] cluster. (2E)-4-hydroxy-3-methylbut-2-enyl diphosphate contacts are provided by S253, S254, N255, and S302. Residues S253, S254, N255, and S302 each contribute to the dimethylallyl diphosphate site. Isopentenyl diphosphate is bound by residues S253, S254, N255, and S302.

This sequence belongs to the IspH family. [4Fe-4S] cluster serves as cofactor.

The catalysed reaction is isopentenyl diphosphate + 2 oxidized [2Fe-2S]-[ferredoxin] + H2O = (2E)-4-hydroxy-3-methylbut-2-enyl diphosphate + 2 reduced [2Fe-2S]-[ferredoxin] + 2 H(+). It carries out the reaction dimethylallyl diphosphate + 2 oxidized [2Fe-2S]-[ferredoxin] + H2O = (2E)-4-hydroxy-3-methylbut-2-enyl diphosphate + 2 reduced [2Fe-2S]-[ferredoxin] + 2 H(+). The protein operates within isoprenoid biosynthesis; dimethylallyl diphosphate biosynthesis; dimethylallyl diphosphate from (2E)-4-hydroxy-3-methylbutenyl diphosphate: step 1/1. Its pathway is isoprenoid biosynthesis; isopentenyl diphosphate biosynthesis via DXP pathway; isopentenyl diphosphate from 1-deoxy-D-xylulose 5-phosphate: step 6/6. In terms of biological role, catalyzes the conversion of 1-hydroxy-2-methyl-2-(E)-butenyl 4-diphosphate (HMBPP) into a mixture of isopentenyl diphosphate (IPP) and dimethylallyl diphosphate (DMAPP). Acts in the terminal step of the DOXP/MEP pathway for isoprenoid precursor biosynthesis. This chain is 4-hydroxy-3-methylbut-2-enyl diphosphate reductase, found in Chlorobium luteolum (strain DSM 273 / BCRC 81028 / 2530) (Pelodictyon luteolum).